The primary structure comprises 283 residues: Acetylglutamate kinase (283 aa).

Residues 63-64 (GG), Arg85, and Asn179 each bind substrate.

Belongs to the acetylglutamate kinase family. ArgB subfamily.

The protein resides in the cytoplasm. It catalyses the reaction N-acetyl-L-glutamate + ATP = N-acetyl-L-glutamyl 5-phosphate + ADP. It functions in the pathway amino-acid biosynthesis; L-arginine biosynthesis; N(2)-acetyl-L-ornithine from L-glutamate: step 2/4. In terms of biological role, catalyzes the ATP-dependent phosphorylation of N-acetyl-L-glutamate. This chain is Acetylglutamate kinase, found in Clostridium kluyveri (strain NBRC 12016).